We begin with the raw amino-acid sequence, 387 residues long: uncharacterized protein (387 aa).

This sequence to M.jannaschii MJ0043 N-terminal region.

This is an uncharacterized protein from Bacillus subtilis (strain 168).